Consider the following 90-residue polypeptide: Small ribosomal subunit protein uS15c (90 aa).

The protein belongs to the universal ribosomal protein uS15 family. In terms of assembly, part of the 30S ribosomal subunit.

The protein resides in the plastid. Its subcellular location is the chloroplast. The sequence is that of Small ribosomal subunit protein uS15c (rps15) from Liriodendron tulipifera (Tuliptree).